The primary structure comprises 238 residues: uncharacterized protein (238 aa).

Helical transmembrane passes span 19-39 (IVIEAFPGTGLVGSIAGFQII), 79-99 (IILFSDIIISPFKINGLAEFI), and 141-161 (YVEIFDFGVVGGMGGNLLIKC).

Its subcellular location is the cell membrane. This is an uncharacterized protein from Methanocaldococcus jannaschii (strain ATCC 43067 / DSM 2661 / JAL-1 / JCM 10045 / NBRC 100440) (Methanococcus jannaschii).